A 669-amino-acid polypeptide reads, in one-letter code: MADPASYRPQTGEIPTNPGVYRFRDPHGRVIYVGKAKSLRSRLNSYFANPGGLLPKTYAMVHAASSVEWTVVASELESLQLEYTWIKEFKPRFNVVFRDDKTYPYLAVTMGEKFPRVQVLRGERRKGTRYFGPYTAGAIRETMDTLLRVFPVRSCSPGVLKRAQASGRPCLLGYIDKCAAPCVGRVTPEEHRALAEDFCSFMGGEAKRFIGRLEKDMAAAVAELDYERAARVRDDIIALRKVFERNAVVLAEDTDADVFALHEDELEAAVQVFHVRGGRVRGQRGWVVEKVEDFTTPDLVEHLLQQVYGEEGETQGRLPREVLVPEEPSNAAELAQWLAGLRGAKVDIRVPRRGDKAALMSTVRENAEHALKLHKSRRAGDLTNRSLALQELQEALDLPVALLRIECFDISHVQGTNVVASMVVVEDGLPKKSDYRKFSITGAAAVDDTAAMHDVLTRRFRNYLQEKAAQAEAAQLPGHQAALEAMAVASMQDTTTPAPRAKFAYPPNLVVVDGGKPQVNAAARALAELGIDDVYVVGLAKRLEEVWLPDSDFPVILPRTSEGLYLLQRIRDEAHRFAITFHRQKRGKAMTVSALDSVPGLGEAKRKALLAQFGSVKSIRTASAAELATAKGIGPSLADAIVSHFSNGAAASGAEAPSINMTTGEIIET.

The GIY-YIG domain maps to Thr16–Val95. Residues Lys207–Val242 form the UVR domain.

Belongs to the UvrC family. In terms of assembly, interacts with UvrB in an incision complex.

The protein localises to the cytoplasm. In terms of biological role, the UvrABC repair system catalyzes the recognition and processing of DNA lesions. UvrC both incises the 5' and 3' sides of the lesion. The N-terminal half is responsible for the 3' incision and the C-terminal half is responsible for the 5' incision. In Arthrobacter sp. (strain FB24), this protein is UvrABC system protein C.